The chain runs to 217 residues: Insulin-like growth factor 2.L (217 aa).

A signal peptide spans 1 to 56; it reads MEQLSCKHRSSSMEAEAQLCRQTESRSTQLPRMSVMRHLFLLSITFLVYTLDSAKA. The interval 57 to 83 is b; the sequence is YRPTETLCGGELVDTLQFVCGDRGFYF. 3 disulfide bridges follow: Cys64–Cys103, Cys76–Cys116, and Cys102–Cys107. The segment at 84 to 96 is c; sequence STNNGRSNRRSNR. An a region spans residues 97–117; it reads GIVEECCFRSCDLELLETYCA. The segment at 118–123 is d; that stretch reads KPSKNE. The propeptide at 124 to 217 is e peptide; that stretch reads RDVSTAPATA…LQQTSEPSHN (94 aa).

The protein belongs to the insulin family.

The protein resides in the secreted. The insulin-like growth factors, isolated from plasma, are structurally and functionally related to insulin but have a much higher growth-promoting activity. Promotes anterior neural development. Acts as a ligand for integrin which is required for IGF2 signaling. In Xenopus laevis (African clawed frog), this protein is Insulin-like growth factor 2.L.